Reading from the N-terminus, the 391-residue chain is Ferrochelatase (391 aa).

2 residues coordinate Fe cation: histidine 196 and glutamate 281.

It belongs to the ferrochelatase family.

It localises to the cytoplasm. It catalyses the reaction heme b + 2 H(+) = protoporphyrin IX + Fe(2+). The protein operates within porphyrin-containing compound metabolism; protoheme biosynthesis; protoheme from protoporphyrin-IX: step 1/1. In terms of biological role, catalyzes the ferrous insertion into protoporphyrin IX. This chain is Ferrochelatase, found in Prochlorococcus marinus (strain AS9601).